Reading from the N-terminus, the 428-residue chain is MPIIEQVGAREILDSRGNPTVEVEVALIDGTFARAAVPSGASTGEHEAVELRDGGDRYGGKGVKKAVEAVLDEIGPAVIGLNADDQRLVDQALVDLDGTPDKSRLGGNSILGVSLAVAKAASESAELPLFRYIGGPNAHILPVPMMNILNGGAHADTGVDIQEFMVAPIGAPSFSEALRWGAEVYHALKAVLKKAGLSTGLGDEGGFAPDVASTTAALDLISQAIEAAGFKPGVDVALALDAAANEFHADGSYTFEGTPRTAAQMTEFYAGLLGSYPVVSIEDPLYENDWDGWAALTAEIGDRVQIVGDDVFVTNPERLEEGIDRGVANALLVKVNQIGTLTETLDAVALAHHSGYRTMISHRSGETEDTIIADLAVAVGSGQIKTGAPARSERVAKYNQLLRIEEALGDAARYAGDLAFPRFVADPK.

Q162 contacts (2R)-2-phosphoglycerate. E204 (proton donor) is an active-site residue. Residues D241, E282, and D309 each contribute to the Mg(2+) site. K334, R363, S364, and K385 together coordinate (2R)-2-phosphoglycerate. The active-site Proton acceptor is K334.

This sequence belongs to the enolase family. It depends on Mg(2+) as a cofactor.

Its subcellular location is the cytoplasm. It is found in the secreted. The protein resides in the cell surface. It carries out the reaction (2R)-2-phosphoglycerate = phosphoenolpyruvate + H2O. The protein operates within carbohydrate degradation; glycolysis; pyruvate from D-glyceraldehyde 3-phosphate: step 4/5. Its function is as follows. Catalyzes the reversible conversion of 2-phosphoglycerate (2-PG) into phosphoenolpyruvate (PEP). It is essential for the degradation of carbohydrates via glycolysis. In Mycobacterium ulcerans (strain Agy99), this protein is Enolase.